The sequence spans 298 residues: uncharacterized protein (298 aa).

In terms of domain architecture, HTH lysR-type spans 1-61 (MDIFISKKMR…TRKDNNISLN (61 aa)). Residues 21–40 (IARAAEKIHMTASPFGKSIA) constitute a DNA-binding region (H-T-H motif).

This sequence belongs to the LysR transcriptional regulatory family.

This is an uncharacterized protein from Escherichia coli (strain K12).